Here is a 634-residue protein sequence, read N- to C-terminus: MTNSNLRTENHFDYVKISIASPQRIMDWGQRTLPNGQVVGEVTKPETINYRTLKPEMDGLFCEKIFGPSKDWECHCGKYKRVRHRGIVCERCGVEVTESRVRRHRMGYIKLAAPVSHVWYLKGIPSYVAILLDIPLRDVEQIVYFNCYVVLDVGDHKDLKYKQLLTEDEWLEIEDEVYAEDSTIENEPVVGIGAEALKQLLEDLDLNQIAEELREEITNSKGQKRAKLIKRIRVIDNFLATNAKPEWMVLDAIPVIPPDLRPMVQLDGGRFATSDLNDLYRRVINRNNRLARLQEILAPEIIVRNEKRMLQEAVDALIDNGRRGRTVVGANNRALKSLSDIIEGKQGRFRQNLLGKRVDYSGRSVIVVGPKLKMHQCGLPKEMAIELFQPFVIHRLIRQNIVNNIKAAKKLIQKGDDEVMQVLQEVIEGHPILLNRAPTLHRLGIQAFEPKLVGGRAIQLHPLVCPAFNADFDGDQMAVHVPLALEAQTEARMLMLASNNILSPATGEPIVTPSQDMVLGSYYLTALQPNFKKPNFGDNQKTYASLEDVIFAFEDKRVGLHEWVWVRFNGEVDDDEEANKPKESKELEDGSRLETWNFRRDRFDSQNNLISRFILTTVGRVVMNHTIIDSVSKT.

Residues Cys74, Cys76, Cys89, and Cys92 each contribute to the Zn(2+) site. Mg(2+) is bound by residues Asp471, Asp473, and Asp475.

The protein belongs to the RNA polymerase beta' chain family. RpoC1 subfamily. In terms of assembly, in cyanobacteria the RNAP catalytic core is composed of 2 alpha, 1 beta, 1 beta', 1 gamma and 1 omega subunit. When a sigma factor is associated with the core the holoenzyme is formed, which can initiate transcription. Mg(2+) is required as a cofactor. It depends on Zn(2+) as a cofactor.

The catalysed reaction is RNA(n) + a ribonucleoside 5'-triphosphate = RNA(n+1) + diphosphate. DNA-dependent RNA polymerase catalyzes the transcription of DNA into RNA using the four ribonucleoside triphosphates as substrates. The protein is DNA-directed RNA polymerase subunit gamma of Prochlorococcus marinus subsp. pastoris (strain CCMP1986 / NIES-2087 / MED4).